Here is a 252-residue protein sequence, read N- to C-terminus: MKQKKVKKAGLRKGGFTFKQFFVAHDKCEMKVGTDGVLLGAWAPITKAKTVLDIGTGSGLIALMLAQRAPQVERIDGIELDEDAALQASENAQQSQWSSLIHIYHHDIYQYAQQAPTRYDLIVSNPPYFEPAVACRNQEREQARYTKTLTHEGLLDSAQQLITDEGLFCVVLPYLIGEQFIEISQRKGWNVVQRVNIKDSADKPYHRILLAFQRQYQGETKPCNIEELIIRNNDGHYTTQFQSWVTDFYLYY.

It belongs to the methyltransferase superfamily. tRNA (adenine-N(6)-)-methyltransferase family.

The protein localises to the cytoplasm. The catalysed reaction is adenosine(37) in tRNA1(Val) + S-adenosyl-L-methionine = N(6)-methyladenosine(37) in tRNA1(Val) + S-adenosyl-L-homocysteine + H(+). Its function is as follows. Specifically methylates the adenine in position 37 of tRNA(1)(Val) (anticodon cmo5UAC). The protein is tRNA1(Val) (adenine(37)-N6)-methyltransferase of Proteus mirabilis (strain HI4320).